The primary structure comprises 205 residues: MTKRISAKHKIDRRLKINLWGRPKSPFNKRDYGPGQHGQGRKGKPSDYGIQLQAKQKLKGYYGNINERQFRNIYKKATMLKGDTGENLIGLLERRLDSVVYRARFSTTVFSARQLINHGHVRVNGKKVNIGSYVVKEEDIIEIRDKSKQLAIIDIALASKERETPEYINLDEKNKKVTFVRTPKFDEVPYPVIMEPNLVIEYYSR.

Positions 21–47 (GRPKSPFNKRDYGPGQHGQGRKGKPSD) are disordered. An S4 RNA-binding domain is found at 94 to 154 (RRLDSVVYRA…DKSKQLAIID (61 aa)).

Belongs to the universal ribosomal protein uS4 family. In terms of assembly, part of the 30S ribosomal subunit. Contacts protein S5. The interaction surface between S4 and S5 is involved in control of translational fidelity.

Its function is as follows. One of the primary rRNA binding proteins, it binds directly to 16S rRNA where it nucleates assembly of the body of the 30S subunit. Functionally, with S5 and S12 plays an important role in translational accuracy. The sequence is that of Small ribosomal subunit protein uS4 from Pelagibacter ubique (strain HTCC1062).